The primary structure comprises 1156 residues: Condensin-2 complex subunit G2 (1156 aa).

Residues 460-498 (MLPALKFCLHDNSEKVRVAFVDMLLKIKAVRAAKFWKIC) form an HEAT repeat. The disordered stretch occupies residues 587–611 (PNEDTEDEDDDEGDGEGIVRGDSEK). Residues 589 to 601 (EDTEDEDDDEGDG) are compositionally biased toward acidic residues.

As to quaternary structure, component of the condensin-2 complex, which contains the smc2 and smc4 heterodimer, and three non SMC subunits that probably regulate the complex: ncaph2, ncapd3 and ncapg2.

Its subcellular location is the nucleus. Its function is as follows. Regulatory subunit of the condensin-2 complex, a complex which establishes mitotic chromosome architecture and is involved in physical rigidity of the chromatid axis. The polypeptide is Condensin-2 complex subunit G2 (ncapg2) (Xenopus laevis (African clawed frog)).